Reading from the N-terminus, the 482-residue chain is Zinc finger protein 385B (482 aa).

The required for induction of apoptosis stretch occupies residues 1 to 105; sequence MNMATFLRGF…TGSACHTTTL (105 aa). 2 Matrin-type zinc fingers span residues 34 to 64 and 169 to 199; these read SFCEVCNIQLNSAAQAQVHYDGKSHRKRVKQ and ISCNVCQLRFNSDSQAEAHYKGSKHAKKVKA. Disordered stretches follow at residues 54–75, 189–259, and 268–287; these read DGKSHRKRVKQLSDGQPPPPVQ, KGSK…SFLL, and LGAIASPSKSTNGAPGSVAE. Residues 106 to 482 are interaction with p53/TP53; sequence PALVRTPTLM…TPASILFAPY (377 aa). Residues 231–240 are compositionally biased toward basic and acidic residues; it reads SSDKSEDKGK. The Matrin-type 3 zinc finger occupies 294–328; the sequence is KKLLYCSLCKVAVNSLSQLEAHNTGSKHKTMVEAR. Disordered regions lie at residues 331–352 and 378–397; these read AGPIKSYPRPGSRLKVQNGSKG and HISSRRHKDRVAGKPLKPKY. The Matrin-type 4 zinc finger occupies 360-390; it reads FHCEICDVHVNSEIQLKQHISSRRHKDRVAG.

As to quaternary structure, interacts with p53/TP53; the interaction is direct.

The protein resides in the nucleus. Its function is as follows. May play a role in p53/TP53-mediated apoptosis. This Mus musculus (Mouse) protein is Zinc finger protein 385B (Znf385b).